A 96-amino-acid polypeptide reads, in one-letter code: Co-chaperonin GroES (96 aa).

Belongs to the GroES chaperonin family. In terms of assembly, heptamer of 7 subunits arranged in a ring. Interacts with the chaperonin GroEL.

The protein localises to the cytoplasm. Together with the chaperonin GroEL, plays an essential role in assisting protein folding. The GroEL-GroES system forms a nano-cage that allows encapsulation of the non-native substrate proteins and provides a physical environment optimized to promote and accelerate protein folding. GroES binds to the apical surface of the GroEL ring, thereby capping the opening of the GroEL channel. The protein is Co-chaperonin GroES of Actinobacillus pleuropneumoniae serotype 3 (strain JL03).